We begin with the raw amino-acid sequence, 176 residues long: Large ribosomal subunit protein uL6 (176 aa).

Belongs to the universal ribosomal protein uL6 family. Part of the 50S ribosomal subunit.

Functionally, this protein binds to the 23S rRNA, and is important in its secondary structure. It is located near the subunit interface in the base of the L7/L12 stalk, and near the tRNA binding site of the peptidyltransferase center. The polypeptide is Large ribosomal subunit protein uL6 (Lactobacillus helveticus (strain DPC 4571)).